A 216-amino-acid chain; its full sequence is Ras-related protein Rab-5C (216 aa).

GTP contacts are provided by Ser30, Ala31, Gly33, Lys34, Ser35, Ser36, His47, Glu48, Thr53, and Gly79. Ser35 contributes to the Mg(2+) binding site. Short sequence motifs (switch) lie at residues 45–57 (QFHE…IGAA) and 78–94 (AGQE…YRGA). Position 53 (Thr53) interacts with Mg(2+). Phosphoserine; by LRRK2 is present on Ser85. GTP contacts are provided by Asn134, Lys135, Asp137, Ala165, and Lys166. Positions 185–216 (NEPQNATGAPGRNRGVDLQENNPASRSQCCSN) are disordered. Polar residues predominate over residues 203–216 (QENNPASRSQCCSN). 2 S-geranylgeranyl cysteine lipidation sites follow: Cys213 and Cys214.

Belongs to the small GTPase superfamily. Rab family. Interacts with EEA1. Interacts with INCA1. Interacts with GDI1, GDI2, CHML and CHM; phosphorylation at Ser-85 disrupts this interaction. Requires Mg(2+) as cofactor. Post-translationally, phosphorylation of Ser-85 in the switch II region by LRRK2 prevents the association of RAB regulatory proteins, including CHM, CHML and RAB GDP dissociation inhibitors GDI1 and GDI2. In terms of processing, (Microbial infection) Glycosylated on arginine residues by S.typhimurium protein Ssek3.

Its subcellular location is the cell membrane. It is found in the early endosome membrane. It localises to the melanosome. The catalysed reaction is GTP + H2O = GDP + phosphate + H(+). Regulated by guanine nucleotide exchange factors (GEFs) which promote the exchange of bound GDP for free GTP. Regulated by GTPase activating proteins (GAPs) which increase the GTP hydrolysis activity. Inhibited by GDP dissociation inhibitors (GDIs). The small GTPases Rab are key regulators of intracellular membrane trafficking, from the formation of transport vesicles to their fusion with membranes. Rabs cycle between an inactive GDP-bound form and an active GTP-bound form that is able to recruit to membranes different sets of downstream effectors directly responsible for vesicle formation, movement, tethering and fusion. This is Ras-related protein Rab-5C from Homo sapiens (Human).